The sequence spans 296 residues: Enoyl-CoA hydratase AFT3-1 (296 aa).

The short motif at 294 to 296 (PKL) is the Peroxisomal targeting signal type 1 element.

It belongs to the enoyl-CoA hydratase/isomerase family.

It is found in the peroxisome. The enzyme catalyses a (3S)-3-hydroxyacyl-CoA = a (2E)-enoyl-CoA + H2O. The catalysed reaction is a 4-saturated-(3S)-3-hydroxyacyl-CoA = a (3E)-enoyl-CoA + H2O. It participates in mycotoxin biosynthesis. Functionally, enoyl-CoA hydratase; part of the gene clusters that mediate the biosynthesis of the host-selective toxins (HSTs) AF-toxins responsible for Alternaria black spot of strawberry disease by the strawberry pathotype. AF-toxin I and III are valine derivatives of 2,3-dyhydroxy-isovaleric acid and 2-hydroxy-isovaleric acid respectively, while AF II is an isoleucine derivative of 2-hydroxy-valeric acid. These derivatives are bound to a 9,10-epoxy-8-hydroxy-9-methyl-decatrienoic acid (EDA) moiety. On cellular level, AF-toxins affect plasma membrane of susceptible cells and cause a sudden increase in loss of K(+) after a few minutes of toxin treatment. The aldo-keto reductase AFTS1 catalyzes the conversion of 2-keto-isovaleric acid (2-KIV) to 2-hydroxy-isovaleric acid (2-HIV) by reduction of its ketone to an alcohol. The acyl-CoA ligase AFT1, the hydrolase AFT2 and the enoyl-CoA hydratases AFT3 and AFT6, but also the polyketide synthase AFT9, the acyl-CoA dehydrogenase AFT10, the cytochrome P450 monooxygenase AFT11 and the oxidoreductase AFT12 are all involved in the biosynthesis of the AK-, AF- and ACT-toxin common EDA structural moiety. The exact function of each enzyme, and of additional enzymes identified within the AF-toxin clusters have still to be determined. The polypeptide is Enoyl-CoA hydratase AFT3-1 (AFT3-1) (Alternaria alternata (Alternaria rot fungus)).